The sequence spans 427 residues: Phosphatidate cytidylyltransferase, mitochondrial (427 aa).

A compositionally biased stretch (polar residues) spans 94-106 (YNRNGDGSTSTEN). The segment at 94–113 (YNRNGDGSTSTENPSKKEEQ) is disordered.

This sequence belongs to the TAM41 family. Mg(2+) is required as a cofactor.

The protein resides in the mitochondrion inner membrane. The enzyme catalyses a 1,2-diacyl-sn-glycero-3-phosphate + CTP + H(+) = a CDP-1,2-diacyl-sn-glycerol + diphosphate. Its pathway is phospholipid metabolism; CDP-diacylglycerol biosynthesis; CDP-diacylglycerol from sn-glycerol 3-phosphate: step 3/3. Its function is as follows. Catalyzes the formation of CDP-diacylglycerol (CDP-DAG) from phosphatidic acid (PA) in the mitochondrial inner membrane. Required for the biosynthesis of the dimeric phospholipid cardiolipin, which stabilizes supercomplexes of the mitochondrial respiratory chain in the mitochondrial inner membrane. The sequence is that of Phosphatidate cytidylyltransferase, mitochondrial from Dictyostelium discoideum (Social amoeba).